The sequence spans 119 residues: uncharacterized protein (119 aa).

The stretch at 63-104 forms a coiled coil; the sequence is KKIKKELESNSEKRKAALQMIKEEHTAKVDRYKMIIEDLRQQ.

This is an uncharacterized protein from Bacillus subtilis (strain 168).